We begin with the raw amino-acid sequence, 372 residues long: NAD(P)H-quinone oxidoreductase subunit 1 (372 aa).

Helical transmembrane passes span 27–47, 97–117, 130–150, 176–196, 204–224, 254–274, 308–328, and 351–371; these read AIWM…GVLV, WLFL…YLIV, VGIF…LMAG, LALS…IDIV, ILGW…IAAL, FALF…VFAV, SLGI…AILL, and VSLV…FAFG.

The protein belongs to the complex I subunit 1 family. NDH-1 is composed of at least 11 different subunits.

The protein resides in the cellular thylakoid membrane. The enzyme catalyses a plastoquinone + NADH + (n+1) H(+)(in) = a plastoquinol + NAD(+) + n H(+)(out). It carries out the reaction a plastoquinone + NADPH + (n+1) H(+)(in) = a plastoquinol + NADP(+) + n H(+)(out). In terms of biological role, NDH-1 shuttles electrons from an unknown electron donor, via FMN and iron-sulfur (Fe-S) centers, to quinones in the respiratory and/or the photosynthetic chain. The immediate electron acceptor for the enzyme in this species is believed to be plastoquinone. Couples the redox reaction to proton translocation, and thus conserves the redox energy in a proton gradient. This is NAD(P)H-quinone oxidoreductase subunit 1 from Microcystis aeruginosa (strain NIES-843 / IAM M-2473).